A 466-amino-acid chain; its full sequence is Putative outer membrane protein NMB0088 (466 aa).

Residues 1 to 24 form the signal peptide; the sequence is MTPSALKKTVLLLGTAFAAASVHA.

It belongs to the OmpP1/FadL family.

It localises to the cell outer membrane. The sequence is that of Putative outer membrane protein NMB0088 from Neisseria meningitidis serogroup B (strain ATCC BAA-335 / MC58).